A 269-amino-acid polypeptide reads, in one-letter code: Zinc transporter ZupT (269 aa).

Transmembrane regions (helical) follow at residues 12–32 (AFSI…LVMF), 41–61 (LSFG…TEIF), 75–95 (DHAF…IALI), 126–146 (MMAA…TFFA), 152–172 (AVGM…GISI), 187–207 (VWAC…GYLV), 211–231 (FLSP…MVFL), and 249–269 (TVYG…LFHF). Fe(2+)-binding residues include asparagine 136 and glutamate 139. Residues glutamate 139 and histidine 164 each coordinate Zn(2+). Fe(2+) is bound by residues asparagine 165, glutamate 168, and glutamate 197. Residue glutamate 168 participates in Zn(2+) binding.

The protein belongs to the ZIP transporter (TC 2.A.5) family. ZupT subfamily.

It localises to the cell inner membrane. The catalysed reaction is Zn(2+)(in) = Zn(2+)(out). Functionally, mediates zinc uptake. May also transport other divalent cations. The chain is Zinc transporter ZupT from Neisseria meningitidis serogroup B (strain ATCC BAA-335 / MC58).